The chain runs to 412 residues: Putative competence-damage inducible protein (412 aa).

It belongs to the CinA family.

The chain is Putative competence-damage inducible protein from Bacillus cereus (strain ATCC 14579 / DSM 31 / CCUG 7414 / JCM 2152 / NBRC 15305 / NCIMB 9373 / NCTC 2599 / NRRL B-3711).